We begin with the raw amino-acid sequence, 749 residues long: Protein lin-54 homolog (749 aa).

A Glycyl lysine isopeptide (Lys-Gly) (interchain with G-Cter in SUMO2) cross-link involves residue lysine 139. N6-acetyllysine is present on residues lysine 244 and lysine 249. Residues serine 264, serine 282, serine 310, and serine 314 each carry the phosphoserine modification. Residue lysine 357 forms a Glycyl lysine isopeptide (Lys-Gly) (interchain with G-Cter in SUMO2) linkage. The CRC domain maps to 521 to 634; sequence PRKPCNCTKS…KCIGCKNFEE (114 aa). Positions 523-536 are DNA-binding; it reads KPCNCTKSLCLKLY. Zn(2+) contacts are provided by cysteine 525, cysteine 527, cysteine 532, cysteine 537, cysteine 539, cysteine 546, cysteine 549, cysteine 551, and cysteine 554. The tract at residues 583 to 596 is linker; it reads IGKGKEGESDRRHS. Positions 599, 601, 606, 611, 613, 620, 624, 626, and 629 each coordinate Zn(2+). The interval 599–612 is DNA-binding; it reads CNCKRSGCLKNYCE. Serine 635 is modified (phosphoserine). Glycyl lysine isopeptide (Lys-Gly) (interchain with G-Cter in SUMO2) cross-links involve residues lysine 639, lysine 659, and lysine 661.

It belongs to the lin-54 family. In terms of assembly, component of the DREAM complex (also named LINC complex) at least composed of E2F4, E2F5, LIN9, LIN37, LIN52, LIN54, MYBL1, MYBL2, RBL1, RBL2, RBBP4, RBL2, TFDP1 and TFDP2. The complex exists in quiescent cells where it represses cell cycle-dependent genes. It dissociates in S phase when LIN9, LIN37, LIN52 and LIN54 form a subcomplex that binds to MYBL2.

The protein localises to the nucleus. Component of the DREAM complex, a multiprotein complex that can both act as a transcription activator or repressor depending on the context. In G0 phase, the complex binds to more than 800 promoters and is required for repression of E2F target genes. In S phase, the complex selectively binds to the promoters of G2/M genes whose products are required for mitosis and participates in their cell cycle dependent activation. In the complex, acts as a DNA-binding protein that binds the promoter of CDK1 in a sequence-specific manner. Specifically recognizes the consensus motif 5'-TTYRAA-3' in target DNA. This is Protein lin-54 homolog (Lin54) from Mus musculus (Mouse).